The chain runs to 217 residues: Glutathione S-transferase 1 (217 aa).

Positions 1-83 (MVMTLYKLDA…YLVSKYGADD (83 aa)) constitute a GST N-terminal domain. Residues S11, 53–55 (HTV), and 67–69 (DSH) each bind glutathione. The GST C-terminal domain maps to 89 to 211 (DPKKRAIVDQ…APGNDLCKDL (123 aa)).

It belongs to the GST superfamily. Theta family. Homodimer.

It catalyses the reaction RX + glutathione = an S-substituted glutathione + a halide anion + H(+). Its function is as follows. Conjugation of reduced glutathione to a wide number of exogenous and endogenous hydrophobic electrophiles. The polypeptide is Glutathione S-transferase 1 (GST1) (Manduca sexta (Tobacco hawkmoth)).